The sequence spans 357 residues: Ribonuclease 3 (357 aa).

The 150-residue stretch at 6–155 (IKFIQDQIGY…ILGAIALDSN (150 aa)) folds into the RNase III domain. Glu45 contributes to the Mg(2+) binding site. Asp49 is an active-site residue. Residues Asp141 and Glu144 each contribute to the Mg(2+) site. The active site involves Glu144. DRBM domains are found at residues 198 to 267 (PLHC…YLKD) and 285 to 355 (DSIG…FVLE).

This sequence belongs to the ribonuclease III family. As to quaternary structure, homodimer. Requires Mg(2+) as cofactor.

Its subcellular location is the cytoplasm. The enzyme catalyses Endonucleolytic cleavage to 5'-phosphomonoester.. Its function is as follows. Digests double-stranded RNA. Involved in the processing of primary rRNA transcript to yield the immediate precursors to the large and small rRNAs (23S and 16S). Processes some mRNAs, and tRNAs when they are encoded in the rRNA operon. Processes pre-crRNA and tracrRNA of type II CRISPR loci if present in the organism. The polypeptide is Ribonuclease 3 (rnc) (Roseburia hominis (strain DSM 16839 / JCM 17582 / NCIMB 14029 / A2-183)).